A 444-amino-acid chain; its full sequence is CBL-interacting serine/threonine-protein kinase 1 (444 aa).

In terms of domain architecture, Protein kinase spans 20-275 (YELGRTLGEG…VVGIKASEWF (256 aa)). ATP-binding positions include 26-34 (LGEGNFGKV) and Lys49. Asp143 serves as the catalytic Proton acceptor. The segment at 161–190 (DFGLSALPQHFRDDGLLHTTCGSPNYVAPE) is activation loop. Ser165 is modified (phosphoserine). Position 179 is a phosphothreonine (Thr179). An NAF domain is found at 313 to 337 (DSPTIINAFQLIGMSSFLDLSGFFE). The segment at 343–372 (ERRIRFTSNSSAKDLLEKIETAVTEMGFSV) is PPI.

The protein belongs to the protein kinase superfamily. CAMK Ser/Thr protein kinase family. SNF1 subfamily. In terms of assembly, interacts with CBL1. Interacts with CBL2. Interacts with CBL3. Interacts with CBL9. Interacts with ECT1 and ECT2. It depends on Mn(2+) as a cofactor. Post-translationally, autophosphorylated. In terms of tissue distribution, ubiquitous.

It catalyses the reaction L-seryl-[protein] + ATP = O-phospho-L-seryl-[protein] + ADP + H(+). The enzyme catalyses L-threonyl-[protein] + ATP = O-phospho-L-threonyl-[protein] + ADP + H(+). Functionally, CIPK serine-threonine protein kinases interact with CBL proteins. Binding of a CBL protein to the regulatory NAF domain of CIPK protein lead to the activation of the kinase in a calcium-dependent manner. This is CBL-interacting serine/threonine-protein kinase 1 (CIPK1) from Arabidopsis thaliana (Mouse-ear cress).